A 556-amino-acid polypeptide reads, in one-letter code: MKSDIEIAQEAKLEPIVKIAEKLGLTEDDIELYGKYKAKIAAHVWDRIKDRPDGKLILVTAINPTPAGEGKTTTTVGLGDALSRLGKKTVIALREPSLGPSFGVKGGAAGGGYAQVVPMEDINLHFTGDLHAITTAHNLLAAMIDNHIHQGNELGIDPRRVVWRRVVDLNDRALRKVVIGLGGPAQGVPRETGFDITVASEIMAILCLASDLMDLKERFNRILIGYTYDQKPVYARDLKAAGAMTVLMKDAIKPNLVQTLEHTPAFVHGGPFANIAHGTNSILADKIALKLADYLVTEAGFGADLGAEKFFNVVCRFAGFKPSAVVIVATVRALKYNGGVPRAELNKENLEALEKGFANLEKHIENIGKFGLPAVVAINRFPTDTDAELNKLRELIEATGAEFALSEVWAKGGEGGIELAQKVLKVIEEKPANFRYLYDLEMPIKQKIETIAREIYGADGVVFTADAEKTLAKFEEMGFGNMPVIMAKTQYSLSDDPNKLGRPTGFNITVRELRASVGAGFIVAITGDIMTMPGLPKRPAAEVIDIDADGKITGLF.

Residue 65 to 72 (TPAGEGKT) participates in ATP binding.

Belongs to the formate--tetrahydrofolate ligase family.

The enzyme catalyses (6S)-5,6,7,8-tetrahydrofolate + formate + ATP = (6R)-10-formyltetrahydrofolate + ADP + phosphate. Its pathway is one-carbon metabolism; tetrahydrofolate interconversion. The sequence is that of Formate--tetrahydrofolate ligase from Carboxydothermus hydrogenoformans (strain ATCC BAA-161 / DSM 6008 / Z-2901).